A 2939-amino-acid polypeptide reads, in one-letter code: Serine/threonine-protein kinase tel1 (2939 aa).

Disordered regions lie at residues 193–212, 695–718, and 859–886; these read GTSV…RAGS, PPED…AADS, and KTRR…ETRK. Basic and acidic residues predominate over residues 697 to 715; the sequence is EDSHKATSTDQPKREEIRA. The FAT domain occupies 1869-2471; the sequence is IAAAAATRCG…MYQIWSGVKA (603 aa). Residues 2577-2890 form the PI3K/PI4K catalytic domain; it reads FEPQMSIASG…DKKSTKNLNE (314 aa). The segment at 2583–2589 is G-loop; the sequence is IASGVSA. Positions 2755–2763 are catalytic loop; sequence GLGDRHGHN. The interval 2775–2799 is activation loop; it reads HIDLGVAFELGRILPVPELVPFRLT. The tract at residues 2869–2894 is disordered; it reads DVVEAEDERRAGDKKSTKNLNEPSEA. Basic and acidic residues predominate over residues 2875-2884; the sequence is DERRAGDKKS. The FATC domain maps to 2907–2939; it reads KTLSVMATVNDLINQATDERNLAVLFCGWAAYA.

This sequence belongs to the PI3/PI4-kinase family. ATM subfamily. As to quaternary structure, associates with DNA double-strand breaks.

It is found in the nucleus. The protein resides in the chromosome. Its subcellular location is the telomere. The enzyme catalyses L-seryl-[protein] + ATP = O-phospho-L-seryl-[protein] + ADP + H(+). It carries out the reaction L-threonyl-[protein] + ATP = O-phospho-L-threonyl-[protein] + ADP + H(+). Serine/threonine protein kinase which activates checkpoint signaling upon genotoxic stresses such as ionizing radiation (IR), ultraviolet light (UV), or DNA replication stalling, thereby acting as a DNA damage sensor. Recognizes the substrate consensus sequence [ST]-Q. Phosphorylates histone H2A to form H2AS128ph (gamma-H2A) at sites of DNA damage, involved in the regulation of DNA damage response mechanism. Required for the control of telomere length and genome stability. This Neurospora crassa (strain ATCC 24698 / 74-OR23-1A / CBS 708.71 / DSM 1257 / FGSC 987) protein is Serine/threonine-protein kinase tel1 (mus-21).